The chain runs to 311 residues: Putative dihydroorotate dehydrogenase A (fumarate) (311 aa).

Substrate-binding positions include Lys-45, 69-73, and Asn-128; that span reads NSMGL. An FMN-binding site is contributed by 45–46; it reads KT. Asn-128 contacts FMN. The active-site Nucleophile is Cys-131. FMN contacts are provided by Lys-165 and Val-193. Residue 194 to 195 participates in substrate binding; that stretch reads NS. FMN contacts are provided by residues Gly-220, 248–249, and 270–271; these read GG and GT.

Belongs to the dihydroorotate dehydrogenase family. Type 1 subfamily. Homodimer. It depends on FMN as a cofactor.

It localises to the cytoplasm. The enzyme catalyses (S)-dihydroorotate + fumarate = orotate + succinate. The protein operates within pyrimidine metabolism; UMP biosynthesis via de novo pathway. In terms of biological role, catalyzes the conversion of dihydroorotate to orotate with fumarate as the electron acceptor. This chain is Putative dihydroorotate dehydrogenase A (fumarate) (pyrD), found in Streptococcus pyogenes serotype M5 (strain Manfredo).